Consider the following 755-residue polypeptide: MCKDSACFLTMKETDLEAVATAVQRVAGMLQRPDQLDKVEQYRRREARKKASVEARLKAAIQSQLDGVRTGLSQLHNALNDVKDIQQSLADVSKDWRQSINTIESLKDVKDAVVQHSQLAAAVENLKNIFSVPEIVRETQDLIEQGALLQAHRKLMDLECSRDGLMCEQYRMDSGNKRDMTLIHGYFGSTQGLSDELAKQLWMVLQRSLVTVRRDPTLLVSVVRIIEREEKIDRRILDRKKQTGFVPPGRPKNWKEKMFAILDRTVTTRIEGTQADTRESDKMWLVRHLEIIRKYVLDDLIVAKNLMVQCFPPHYEIFKNLLSMYHQALSTRMQDLASEDLEANEIVSLLTWVLNTYTSAEMMGNVELAPEVDVSALEPLLSPNIVSELLDTYMSTLTSNIIAWLRKALETDKKDWSKETEPEADQDGYYQTTLPAIVFQMFEQNLQVAAQISEDLKTKVLVLCLQQMNSFLSRYKDEAQLYKEEHLRNRQHPHCYVQYMIAIINNCQTFKESIISLKRKYLKTEAEEGLCLSQPSMDGILDAIAKEGCSSLLEEVFLDLEQHLNELMTKKWLLGSNAVDIICVTVEDYFNDFAKIKKPYKKRMTAEAHRRVVVEYLRAVMQKRISFRSAEERKEGAEKMVREAEQLRFLFRKLASGFGEDADGHCDTIVAVAEVIKLTDPSLLYLEVSTLVSKYPDIRDDHIGALLALRGDASRDMKQTIMETLEQGPMQASPNYVPIFKEIVVPSLNVAKLLK.

At Lys38 the chain carries N6-acetyllysine.

Belongs to the SEC6 family. As to quaternary structure, the exocyst complex is composed of EXOC1, EXOC2, EXOC3, EXOC4, EXOC5, EXOC6, EXOC7 and EXOC8. Interacts with EXOC3L1. Interacts with BIRC6/bruce. Interacts with MYRIP. Interacts with SLC6A9.

The protein localises to the cytoplasm. It localises to the perinuclear region. It is found in the cell projection. The protein resides in the growth cone. Its subcellular location is the midbody. The protein localises to the golgi apparatus. It localises to the neuron projection. Functionally, component of the exocyst complex involved in the docking of exocytic vesicles with fusion sites on the plasma membrane. In Mus musculus (Mouse), this protein is Exocyst complex component 3 (Exoc3).